A 233-amino-acid chain; its full sequence is Antigenic membrane protein (233 aa).

An N-terminal signal peptide occupies residues methionine 1–alanine 32. Residues phenylalanine 206–valine 226 form a helical membrane-spanning segment.

Its subcellular location is the cell membrane. This is Antigenic membrane protein (amp) from Onion yellows phytoplasma (strain OY-M).